A 536-amino-acid polypeptide reads, in one-letter code: MTKFIFVTGGVVSSLGKGITAASLGRLLKDRGLKVTIQKFDPYLNVDPGTMSPYQHGEVFVTDDGAETDLDLGHYERFIDINLNKYSNVTAGKVYSHVLKKERRGDYLGGTVQVIPHITNEIKERLLLAGESTNADVVITEIGGTTGDIESLPFIEAIRQIRSDLGRENVMYVHCTLLPYIKAAGEMKTKPTQHSVKELRGLGIQPDLIVVRTEYELTQDLKDKIALFCDIDKASVIECRDADSLYEIPLQLSKQDMDDIVIKRLELNPKYETQLDEWQYLLDTVNSLDGKITIGLVGKYVSLQDAYLSVVESLKHAGYPFKKDIEVKWIDSSEVTDENVAEILAEVDGILVPGGFGFRASEGKISAIKYARENNVPYFGICLGMQLATVEFARNVIGLDDAHSAELDPNTPHPIIDLLPEQKDIEDLGGTLRLGLYPCHIKEGTLADSIYNETEIEERHRHRYEFNNEYREQLEANGMVFSGTSPDGRLVEMVEIPSNDFFVACQFHPEFLSRPNRPQPIFKAFIEASLNHQQSK.

Residues 1–267 are amidoligase domain; the sequence is MTKFIFVTGG…DDIVIKRLEL (267 aa). Serine 13 contributes to the CTP binding site. Serine 13 serves as a coordination point for UTP. Residue 14–19 coordinates ATP; that stretch reads SLGKGI. Tyrosine 54 serves as a coordination point for L-glutamine. Aspartate 71 provides a ligand contact to ATP. Residues aspartate 71 and glutamate 141 each contribute to the Mg(2+) site. CTP contacts are provided by residues 148–150, 188–193, and lysine 224; these read DIE and KTKPTQ. Residues 188–193 and lysine 224 each bind UTP; that span reads KTKPTQ. Position 240 to 242 (240 to 242) interacts with ATP; sequence RDA. Residues 293 to 535 enclose the Glutamine amidotransferase type-1 domain; the sequence is TIGLVGKYVS…IEASLNHQQS (243 aa). Glycine 355 contacts L-glutamine. Catalysis depends on cysteine 382, which acts as the Nucleophile; for glutamine hydrolysis. L-glutamine contacts are provided by residues 383–386, glutamate 406, and arginine 463; that span reads LGMQ. Residues histidine 508 and glutamate 510 contribute to the active site.

The protein belongs to the CTP synthase family. Homotetramer.

It catalyses the reaction UTP + L-glutamine + ATP + H2O = CTP + L-glutamate + ADP + phosphate + 2 H(+). The catalysed reaction is L-glutamine + H2O = L-glutamate + NH4(+). It carries out the reaction UTP + NH4(+) + ATP = CTP + ADP + phosphate + 2 H(+). It functions in the pathway pyrimidine metabolism; CTP biosynthesis via de novo pathway; CTP from UDP: step 2/2. Its activity is regulated as follows. Allosterically activated by GTP, when glutamine is the substrate; GTP has no effect on the reaction when ammonia is the substrate. The allosteric effector GTP functions by stabilizing the protein conformation that binds the tetrahedral intermediate(s) formed during glutamine hydrolysis. Inhibited by the product CTP, via allosteric rather than competitive inhibition. Catalyzes the ATP-dependent amination of UTP to CTP with either L-glutamine or ammonia as the source of nitrogen. Regulates intracellular CTP levels through interactions with the four ribonucleotide triphosphates. In Staphylococcus saprophyticus subsp. saprophyticus (strain ATCC 15305 / DSM 20229 / NCIMB 8711 / NCTC 7292 / S-41), this protein is CTP synthase.